The sequence spans 499 residues: Glycerol kinase (499 aa).

Residue threonine 13 participates in ADP binding. The ATP site is built by threonine 13, threonine 14, and serine 15. Threonine 13 provides a ligand contact to sn-glycerol 3-phosphate. Arginine 17 provides a ligand contact to ADP. Arginine 83, glutamate 84, tyrosine 135, and aspartate 244 together coordinate sn-glycerol 3-phosphate. Glycerol is bound by residues arginine 83, glutamate 84, tyrosine 135, aspartate 244, and glutamine 245. Residues threonine 266 and glycine 309 each coordinate ADP. ATP is bound by residues threonine 266, glycine 309, glutamine 313, and glycine 410. 2 residues coordinate ADP: glycine 410 and asparagine 414.

Belongs to the FGGY kinase family.

The enzyme catalyses glycerol + ATP = sn-glycerol 3-phosphate + ADP + H(+). Its pathway is polyol metabolism; glycerol degradation via glycerol kinase pathway; sn-glycerol 3-phosphate from glycerol: step 1/1. Its activity is regulated as follows. Inhibited by fructose 1,6-bisphosphate (FBP). Functionally, key enzyme in the regulation of glycerol uptake and metabolism. Catalyzes the phosphorylation of glycerol to yield sn-glycerol 3-phosphate. In Paraburkholderia xenovorans (strain LB400), this protein is Glycerol kinase.